Consider the following 149-residue polypeptide: Calmodulin (149 aa).

The residue at position 2 (Ala2) is an N-acetylalanine. 4 EF-hand domains span residues 8–43 (EQIS…LGQN), 44–79 (PTEA…KMRD), 81–116 (DSEE…LGEK), and 117–149 (LTDN…MLSK). The Ca(2+) site is built by Asp21, Asp23, Asp25, Thr27, Glu32, Asp57, Asp59, Asn61, Thr63, Glu68, Asp94, Asp96, Asn98, Tyr100, Glu105, Asp130, Asp132, Asp134, Gln136, and Glu141.

Belongs to the calmodulin family.

Its function is as follows. Calmodulin mediates the control of a large number of enzymes, ion channels and other proteins by Ca(2+). Among the enzymes to be stimulated by the calmodulin-Ca(2+) complex are a number of protein kinases and phosphatases. The sequence is that of Calmodulin (CMD1) from Pleurotus ostreatus (Oyster mushroom).